The primary structure comprises 75 residues: Translational regulator CsrA (75 aa).

Belongs to the CsrA/RsmA family. As to quaternary structure, homodimer; the beta-strands of each monomer intercalate to form a hydrophobic core, while the alpha-helices form wings that extend away from the core.

The protein resides in the cytoplasm. In terms of biological role, a translational regulator that binds mRNA to regulate translation initiation and/or mRNA stability. Usually binds in the 5'-UTR at or near the Shine-Dalgarno sequence preventing ribosome-binding, thus repressing translation. Its main target seems to be the major flagellin gene, while its function is anatagonized by FliW. This Thermosipho melanesiensis (strain DSM 12029 / CIP 104789 / BI429) protein is Translational regulator CsrA.